Consider the following 554-residue polypeptide: (Z)-gamma-bisabolene synthase 2 (554 aa).

4 residues coordinate Mg(2+): aspartate 306, aspartate 310, aspartate 450, and aspartate 458. Residues 306–310 carry the DDXXD motif motif; it reads DDACD.

This sequence belongs to the terpene synthase family. Tpsa subfamily. It depends on Mg(2+) as a cofactor. Requires Mn(2+) as cofactor. Predominantly expressed in roots. Expressed in the cortex and the sub-epidermal layers of roots. Also detected in leaf hydathodes and flower stigmata.

It is found in the cytoplasm. It carries out the reaction (2E,6E)-farnesyl diphosphate = (Z)-gamma-bisabolene + diphosphate. It functions in the pathway secondary metabolite biosynthesis; terpenoid biosynthesis. Functionally, involved in sesquiterpene (C15) biosynthesis. The major product is (Z)-gamma-bisabolene with minor amounts of (E)-nerolidol and alpha-bisabolol. This is (Z)-gamma-bisabolene synthase 2 (TPS13) from Arabidopsis thaliana (Mouse-ear cress).